A 370-amino-acid chain; its full sequence is uncharacterized protein (370 aa).

The next 10 membrane-spanning stretches (helical) occupy residues 6-26 (AVVF…CLGN), 49-69 (IGIV…VAPF), 79-99 (SFAN…GEMA), 111-131 (FLGT…LGII), 143-163 (ILIG…CAGF), 167-187 (MIGK…FGLW), 206-226 (MVAI…IVLI), 236-256 (IQTT…TAFI), 307-327 (VAFA…VAGM), and 333-353 (AAMI…AAWM).

This sequence belongs to the EutH family.

It is found in the cell membrane. This is an uncharacterized protein from Bacillus subtilis (strain 168).